A 126-amino-acid polypeptide reads, in one-letter code: Autophagy-related protein 8-like protein DDB_G0290491 (126 aa).

Glycine 123 is lipidated: Phosphatidylethanolamine amidated glycine. Residues 124–126 (SDI) constitute a propeptide, removed in mature form.

This sequence belongs to the ATG8 family.

The protein resides in the membrane. In Dictyostelium discoideum (Social amoeba), this protein is Autophagy-related protein 8-like protein DDB_G0290491.